Reading from the N-terminus, the 23-residue chain is GFRDVLKGAAKAFVKTVAGHIAN.

At asparagine 23 the chain carries Asparagine amide.

Expressed by the skin glands.

It is found in the secreted. In terms of biological role, antimicrobial peptide that shows higher potency against Gram-negative bacteria than against Gram-positive bacteria. Has a very week hemolytic activity. In Ascaphus truei (Coastal tailed frog), this protein is Ascaphin-1.